We begin with the raw amino-acid sequence, 284 residues long: MAADTPVEYIKHHLTNLTYGKLPEGYERADGSVVQEATWTFARTGQEATDMGFMAIHVDTLGWSIAMGILFLGLFRFVANRVTEGTPSGLQNLIEMTFEFVQGIVRDVFHGKNPLIAPLALTIFVWILLMNILKLIPIDYIPSIAHALGLEYFKIVPTTDPNATFGMSIGVFLLILFYSFKVKGVSGFSKELAFNPFNHWIMIPFNLLLEILALIIKPISLALRLFGNMYAGEVVFILIALLPLWIQWTLNVPWAIFHILVIPLQAFIFTVLTVVYLSAAHEDH.

6 consecutive transmembrane segments (helical) span residues 55 to 75 (AIHV…LGLF), 116 to 136 (IAPL…LKLI), 165 to 185 (FGMS…VKGV), 196 to 216 (PFNH…ALII), 234 to 254 (VVFI…NVPW), and 255 to 275 (AIFH…LTVV).

This sequence belongs to the ATPase A chain family. In terms of assembly, F-type ATPases have 2 components, CF(1) - the catalytic core - and CF(0) - the membrane proton channel. CF(1) has five subunits: alpha(3), beta(3), gamma(1), delta(1), epsilon(1). CF(0) has three main subunits: a(1), b(2) and c(9-12). The alpha and beta chains form an alternating ring which encloses part of the gamma chain. CF(1) is attached to CF(0) by a central stalk formed by the gamma and epsilon chains, while a peripheral stalk is formed by the delta and b chains.

It is found in the cell inner membrane. In terms of biological role, key component of the proton channel; it plays a direct role in the translocation of protons across the membrane. This chain is ATP synthase subunit a, found in Marinobacter nauticus (strain ATCC 700491 / DSM 11845 / VT8) (Marinobacter aquaeolei).